A 556-amino-acid polypeptide reads, in one-letter code: Acetyl-coenzyme A thioesterase (556 aa).

The region spanning Ala-6–Gly-118 is the HotDog ACOT-type 1 domain. Residue Lys-34 is modified to N6-succinyllysine. Residues Thr-54 to Ser-56 and Ser-83 to Ser-85 contribute to the CoA site. Lys-97 is subject to N6-succinyllysine. CoA is bound at residue Arg-145. N6-succinyllysine occurs at positions 160 and 229. Positions Met-180–Gln-295 constitute a HotDog ACOT-type 2 domain. Residue Lys-235–Arg-237 participates in CoA binding. Residues Gly-341–Asp-550 form the START domain.

As to quaternary structure, homodimer or homotetramer.

The protein resides in the cytoplasm. Its subcellular location is the cytosol. The catalysed reaction is acetyl-CoA + H2O = acetate + CoA + H(+). The enzyme catalyses butanoyl-CoA + H2O = butanoate + CoA + H(+). It catalyses the reaction hexanoyl-CoA + H2O = hexanoate + CoA + H(+). Its pathway is lipid metabolism; fatty acid metabolism. Its activity is regulated as follows. Allosterically regulated by ATP (activator) and ADP (inhibitor). Cold labile, it dissociates into inactive monomers at low temperature. Catalyzes the hydrolysis of acyl-CoAs into free fatty acids and coenzyme A (CoASH), regulating their respective intracellular levels. Preferentially hydrolyzes acetyl-CoA. The chain is Acetyl-coenzyme A thioesterase (Acot12) from Rattus norvegicus (Rat).